We begin with the raw amino-acid sequence, 397 residues long: Odorant receptor 85a (397 aa).

The Cytoplasmic portion of the chain corresponds to 1–46 (MIFKYIQEPVLGSLFRSRDSLIYLNRSIDQMGWRLPPRTKPYWWLY). A helical transmembrane segment spans residues 47 to 67 (YIWTLVVIVLVFIFIPYGLIM). Topologically, residues 68–83 (TGIKEFKNFTTTDLFT) are extracellular. Asparagine 75 carries N-linked (GlcNAc...) asparagine glycosylation. A helical membrane pass occupies residues 84–104 (YVQVPVNTNASIMKGIIVLFM). Over 105–142 (RRRFSRAQKMMDAMDIRCTKMEEKVQVHRAAALCNRVV) the chain is Cytoplasmic. The chain crosses the membrane as a helical span at residues 143–163 (VIYHCIYFGYLSMALTGALVI). The Extracellular segment spans residues 164-192 (GKTPFCLYNPLVNPDDHFYLATAIESVTM). Residues 193–213 (AGIILANLILDVYPIIYVVVL) traverse the membrane as a helical segment. The Cytoplasmic segment spans residues 214-262 (RIHMELLSERIKTLRTDVEKGDDQHYAELVECVKDHKLIVEYGNTLRPM). A helical transmembrane segment spans residues 263–283 (ISATMFIQLLSVGLLLGLAAV). The Extracellular segment spans residues 284 to 294 (SMQFYNTVMER). A helical membrane pass occupies residues 295 to 315 (VVSGVYTIAILSQTFPFCYVC). Residues 316 to 347 (EQLSSDCESLTNTLFHSKWIGAERRYRTTMLY) lie on the Cytoplasmic side of the membrane. The chain crosses the membrane as a helical span at residues 348-368 (FIHNVQQSILFTAGGIFPICL). Residues 369 to 397 (NTNIKMAKFAFSVVTIVNEMDLAEKLRRE) lie on the Extracellular side of the membrane.

It belongs to the insect chemoreceptor superfamily. Heteromeric odorant receptor channel (TC 1.A.69) family. Or2a subfamily. In terms of assembly, interacts with Orco. Complexes exist early in the endomembrane system in olfactory sensory neurons (OSNs), coupling these complexes to the conserved ciliary trafficking pathway. As to expression, expressed in olfactory sensory neurons in the antenna.

The protein localises to the cell membrane. Its function is as follows. Odorant receptor which mediates acceptance or avoidance behavior, depending on its substrates. The odorant receptor repertoire encodes a large collection of odor stimuli that vary widely in identity, intensity, and duration. May form a complex with Orco to form odorant-sensing units, providing sensitive and prolonged odorant signaling and calcium permeability. The chain is Odorant receptor 85a (Or85a) from Drosophila melanogaster (Fruit fly).